The primary structure comprises 952 residues: Germ layers disorganized gldi-3 (952 aa).

The 62-residue stretch at 39–100 (KSFGRATTND…NGTYINDRRL (62 aa)) folds into the FHA domain. Disordered stretches follow at residues 174–220 (IGPR…MPST), 483–639 (GTPK…ESTV), and 652–866 (AAQS…KERC). Composition is skewed to polar residues over residues 179–195 (PSTT…STNG) and 202–220 (NRAS…MPST). Acidic residues predominate over residues 523–537 (EESEILDVVGTDEPD). A compositionally biased stretch (basic and acidic residues) spans 553 to 568 (PEDHGRQTQNKIDKNV). Polar residues-rich tracts occupy residues 569–584 (RMSS…TPSA) and 600–620 (VTSS…NPVS). The segment covering 662-679 (SVSNTTSSTSASLTTSSV) has biased composition (low complexity). A compositionally biased stretch (basic and acidic residues) spans 685 to 706 (TSSKENTDQKRAVDDSSDESAR). Low complexity predominate over residues 715–724 (SATPSSTPAE). Basic and acidic residues predominate over residues 725–742 (SSKRKQKDTSSRKMKQLD). Basic residues predominate over residues 761 to 772 (TKRRDKARRSTR). The segment covering 789–800 (VEDEDETDDVQE) has biased composition (acidic residues). Basic and acidic residues-rich tracts occupy residues 823–832 (IKERKTKDKD) and 856–866 (PPKTEPSKERC).

Its subcellular location is the nucleus. Functionally, potential transcription factor that may play a role in the regulation of genes involved in cell cycle G1/S transition. May bind to regulatory elements of genes. This is Germ layers disorganized gldi-3 from Caenorhabditis elegans.